The primary structure comprises 280 residues: Shikimate dehydrogenase (NADP(+)) (280 aa).

Shikimate is bound by residues 20 to 22 (SLS) and Thr67. Lys71 acts as the Proton acceptor in catalysis. Glu83 is a binding site for NADP(+). Positions 92 and 107 each coordinate shikimate. NADP(+)-binding positions include 131 to 135 (GAGGA), 155 to 160 (NRTLNK), and Leu224. Residue Tyr226 coordinates shikimate. NADP(+) is bound at residue Gly247.

The protein belongs to the shikimate dehydrogenase family. As to quaternary structure, homodimer.

It catalyses the reaction shikimate + NADP(+) = 3-dehydroshikimate + NADPH + H(+). It participates in metabolic intermediate biosynthesis; chorismate biosynthesis; chorismate from D-erythrose 4-phosphate and phosphoenolpyruvate: step 4/7. In terms of biological role, involved in the biosynthesis of the chorismate, which leads to the biosynthesis of aromatic amino acids. Catalyzes the reversible NADPH linked reduction of 3-dehydroshikimate (DHSA) to yield shikimate (SA). This chain is Shikimate dehydrogenase (NADP(+)), found in Caldanaerobacter subterraneus subsp. tengcongensis (strain DSM 15242 / JCM 11007 / NBRC 100824 / MB4) (Thermoanaerobacter tengcongensis).